The following is a 742-amino-acid chain: MGVRKQTMVKDTAVPIENKKFTREKKDKEKDKKPDRERAGRKTGFFVPKKVETGKKGKLGRKSEGKAEEKAEGKAGISTSTISERAVLKPSAGKRKKAESGPGTKTGKKEKKQKKSFSSSLPASKFLPMSPEEVKARGWKELDIILVTGDAYVDHSSFGTAIIGRVLEDAGFRVGIIAQPRWDNPEDLKKLGRPRLFFSVSAGNTDSMVSNLTPGLKPRKKDAYSPGNKTGLRPNRSVIIYSNRIKEAFPNVPIVLGGIEASLRRFAHYDYLSDKVRQAILADAPADLVVYGMGELQIVEIAKRLQAGEDIRKIRDIPGTVWKMEVRAWKELKEKGKGTNEAVARDTAPEAAEFFKEYIEIPSFSEVSQDKAAFAKAFRTYFLEQNPITGKGIVQPHPKTVIVQNRPMRPLTEAELDHVYELPYTGEAHPSYTEPIPALEMVKFSLTTHRGCFGGCSFCAITQHQGRMITSRSIESVLREAKKLTEKPDFKGIINGVGGPTANMYGMGCRSWEKQGACLDKACLYPRVCPALDTSHKKLLELMKRLRELPGVKHVFTGYGVRYDLALEDEEYLEELCTHHISGQLRIAPEHFSKRVTDAMSKPGKKVYERFSEKFAAFNKKCGKEQYIVNYLMSGHPGCTLKDMIEMAEYLRDHGGYTEQVQDFTPTPMTVSTCMYYTGLDPFTGKKVYVAKDKKEKAMQRALMHYRSPANYELVYEALEKAGRLDLVGNAHKCLIRRKEKQ.

Positions 1 to 125 are disordered; that stretch reads MGVRKQTMVK…SFSSSLPASK (125 aa). The unknown stretch occupies residues 1–128; it reads MGVRKQTMVK…SSLPASKFLP (128 aa). Basic and acidic residues-rich tracts occupy residues 17-40 and 49-73; these read ENKKFTREKKDKEKDKKPDRERAG and KKVETGKKGKLGRKSEGKAEEKAEG. Basic residues predominate over residues 106 to 115; that stretch reads TGKKEKKQKK. The UPF0313 stretch occupies residues 129 to 742; it reads MSPEEVKARG…KCLIRRKEKQ (614 aa). The Radical SAM core domain maps to 438-707; sequence ALEMVKFSLT…AMQRALMHYR (270 aa). [4Fe-4S] cluster contacts are provided by cysteine 452, cysteine 456, and cysteine 459.

The protein in the C-terminal section; belongs to the UPF0313 family. [4Fe-4S] cluster is required as a cofactor.

This chain is UPF0313 protein MA_4618, found in Methanosarcina acetivorans (strain ATCC 35395 / DSM 2834 / JCM 12185 / C2A).